Here is a 124-residue protein sequence, read N- to C-terminus: MPTPPCPCGRSESYEKCCGRFHGGTAAAPTAEALMRSRYCAFVQGDASYLLRTWHPRTRPARLDLDPGMRWTGLEILDTADGSAFHTTGTVTFRASYRGGSLHERSRFERVDGAWVYADGEFLD.

This sequence belongs to the UPF0225 family.

This is UPF0225 protein SCO1677 from Streptomyces coelicolor (strain ATCC BAA-471 / A3(2) / M145).